We begin with the raw amino-acid sequence, 278 residues long: uncharacterized protein (278 aa).

Over residues Met-1–Ser-16 the composition is skewed to basic and acidic residues. 2 disordered regions span residues Met-1–Asn-86 and Phe-98–Leu-126. Composition is skewed to low complexity over residues Gln-33–Ser-45 and Gly-99–Ser-117.

It belongs to the adhesin P1 family.

This is an uncharacterized protein from Mycoplasma pneumoniae (strain ATCC 29342 / M129 / Subtype 1) (Mycoplasmoides pneumoniae).